The chain runs to 148 residues: Helix-loop-helix protein 14 (148 aa).

Disordered regions lie at residues 1-21 (MAKKNQVARNERERKRVHQVN), 63-83 (DPQQPSVSSSTPDYTMNNSNN), and 112-132 (GDVSHNFNSPTSSVSSSSYSP). A basic motif region spans residues 4-17 (KNQVARNERERKRV). Residues 4–56 (KNQVARNERERKRVHQVNHGFDVLRNRLQPKNHTKKWSKADTLREAVKYIQQL) enclose the bHLH domain. The tract at residues 18-56 (HQVNHGFDVLRNRLQPKNHTKKWSKADTLREAVKYIQQL) is helix-loop-helix motif. Residues 63–78 (DPQQPSVSSSTPDYTM) are compositionally biased toward polar residues. Residues 120–132 (SPTSSVSSSSYSP) show a composition bias toward low complexity.

The protein localises to the nucleus. Its function is as follows. Probable transcription factor, involved in determining neuroblast cell fate, morphogenesis and aspects of terminal differentiation in both left/right symmetric and asymmetric neuronal lineages. The chain is Helix-loop-helix protein 14 from Caenorhabditis elegans.